A 501-amino-acid polypeptide reads, in one-letter code: MRNSCWKGKALKQLTFHLKRNSAGRNSSGRITVFHRGGGSKRLQRKIDFKRSTSSMGIVERIEYDPNRSSWIALVRWIEGVLRPGKRLAFSKANSRREKNMFFFGLLFSFSSLPRQAQRIKYEKTRALRPCEQILESSWVLGTRDLRAKEVSLGPLGSFLGLPSIAVAGAKPAFFAFRMKGPSSLTGRERLSPLRGENTFSQSEGQRWKTQSGAPRRKSLVLSWSQGPKARNGLMISAHDIGKKDRRPEMAGPHTIPEHAPRALHAVGPSGSGRVLRTSEPFTYILASENLEVGNTVMNFHGSKPSTLLNYHQPSQKANDPSGLRVEETAWDSQAWLHPRGDYASSENKYILDSYYQMVGNCIPLAKIPIGTWVHNIERNPGQGAKLTRAAGTFAQIIQKVENTPQCIVRLPSGVDKLIDSRCRATIGIVSNLNHGKRKFNKAGQSRWLGRRPIVRGVAMNPVDHPHGGGEGRTKGGRPSVSPWGKPTKGGFKTVVRKRRN.

2 disordered regions span residues Gly-187–Arg-217 and Ala-459–Asn-501. A compositionally biased stretch (polar residues) spans Asn-198 to Gly-213. Over residues Asp-464–Thr-474 the composition is skewed to basic and acidic residues.

This sequence belongs to the universal ribosomal protein uL2 family.

It is found in the mitochondrion. The chain is Large ribosomal subunit protein uL2m (RPL2) from Marchantia polymorpha (Common liverwort).